Here is a 455-residue protein sequence, read N- to C-terminus: Serine--tRNA ligase (455 aa).

Residue 252-254 participates in L-serine binding; that stretch reads TAE. ATP-binding positions include 283-285 and V299; that span reads RKE. E306 serves as a coordination point for L-serine. 370–373 lines the ATP pocket; that stretch reads EVVS. T406 provides a ligand contact to L-serine.

It belongs to the class-II aminoacyl-tRNA synthetase family. Type-1 seryl-tRNA synthetase subfamily. Homodimer. The tRNA molecule binds across the dimer.

Its subcellular location is the cytoplasm. The catalysed reaction is tRNA(Ser) + L-serine + ATP = L-seryl-tRNA(Ser) + AMP + diphosphate + H(+). It carries out the reaction tRNA(Sec) + L-serine + ATP = L-seryl-tRNA(Sec) + AMP + diphosphate + H(+). The protein operates within aminoacyl-tRNA biosynthesis; selenocysteinyl-tRNA(Sec) biosynthesis; L-seryl-tRNA(Sec) from L-serine and tRNA(Sec): step 1/1. In terms of biological role, catalyzes the attachment of serine to tRNA(Ser). Is also able to aminoacylate tRNA(Sec) with serine, to form the misacylated tRNA L-seryl-tRNA(Sec), which will be further converted into selenocysteinyl-tRNA(Sec). This Thermococcus gammatolerans (strain DSM 15229 / JCM 11827 / EJ3) protein is Serine--tRNA ligase.